A 393-amino-acid polypeptide reads, in one-letter code: Chalcone synthase 2 (393 aa).

The active site involves cysteine 166.

The protein belongs to the thiolase-like superfamily. Chalcone/stilbene synthases family.

It carries out the reaction (E)-4-coumaroyl-CoA + 3 malonyl-CoA + 3 H(+) = 2',4,4',6'-tetrahydroxychalcone + 3 CO2 + 4 CoA. The protein operates within secondary metabolite biosynthesis; flavonoid biosynthesis. In terms of biological role, the primary product of this enzyme is 4,2',4',6'-tetrahydroxychalcone (also termed naringenin-chalcone or chalcone) which can under specific conditions spontaneously isomerize into naringenin. The sequence is that of Chalcone synthase 2 (CHS2) from Ruta graveolens (Common rue).